The following is a 483-amino-acid chain: PAT complex subunit CCDC47 (483 aa).

An N-terminal signal peptide occupies residues 1-20 (MKAFHTFCVVLLVFGSVSEA). Residues 21–135 (KFDDFEDEED…PAHLQNSWES (115 aa)) are Cytoplasmic-facing. A disordered region spans residues 46–118 (MEDSVTESPQ…PDTSSSKNKD (73 aa)). Residues 60–104 (TEDDEDETTVELEGQDENQEGDFEDADTQEGDTESEPYDDEEFEG) show a composition bias toward acidic residues. The span at 105–118 (YEDKPDTSSSKNKD) shows a compositional bias: basic and acidic residues. The chain crosses the membrane as a helical span at residues 136-155 (YYLEILMVTGLLAYIMNYII). Topologically, residues 156–483 (GKNKNSRLAQ…KMKQIKVKAM (328 aa)) are lumenal. Asn-178 is a glycosylation site (N-linked (GlcNAc...) asparagine). The disordered stretch occupies residues 424 to 483 (QRQEAAQSRREEKKRAEKERIMNEEDPEKQRRLEEAALRREQKKLEKKQMKMKQIKVKAM). Residues 430 to 472 (QSRREEKKRAEKERIMNEEDPEKQRRLEEAALRREQKKLEKKQ) show a composition bias toward basic and acidic residues. A coiled-coil region spans residues 450–483 (PEKQRRLEEAALRREQKKLEKKQMKMKQIKVKAM). Residues 473–483 (MKMKQIKVKAM) are compositionally biased toward basic residues.

It belongs to the CCDC47 family. As to quaternary structure, component of the PAT complex, composed of WDR83OS/Asterix and CCDC47. The PAT complex is part of the multi-pass translocon (MPT) complex, composed of three subcomplexes, the GEL complex (composed of RAB5IF/OPTI and TMCO1), the BOS complex (composed of NCLN/Nicalin, NOMO and TMEM147) and the PAT complex (composed of WDR83OS/Asterix and CCDC47). The MPT complex associates with the SEC61 complex. Interacts with VCP, HSPA5, DERL1, DERL2 and SELENOS.

The protein resides in the endoplasmic reticulum membrane. It localises to the rough endoplasmic reticulum membrane. Its function is as follows. Component of the multi-pass translocon (MPT) complex that mediates insertion of multi-pass membrane proteins into the lipid bilayer of membranes. The MPT complex takes over after the SEC61 complex: following membrane insertion of the first few transmembrane segments of proteins by the SEC61 complex, the MPT complex occludes the lateral gate of the SEC61 complex to promote insertion of subsequent transmembrane regions. Within the MPT complex, the PAT subcomplex sequesters any highly polar regions in the transmembrane domains away from the non-polar membrane environment until they can be buried in the interior of the fully assembled protein. Within the PAT subcomplex, CCDC47 occludes the lateral gate of the SEC61 complex. Involved in the regulation of calcium ion homeostasis in the ER. Required for proper protein degradation via the ERAD (ER-associated degradation) pathway. Has an essential role in the maintenance of ER organization during embryogenesis. In Homo sapiens (Human), this protein is PAT complex subunit CCDC47.